Reading from the N-terminus, the 788-residue chain is 5-methyltetrahydropteroyltriglutamate--homocysteine methyltransferase (788 aa).

Residues 24 to 27 (RELK) and lysine 140 contribute to the 5-methyltetrahydropteroyltri-L-glutamate site. Residues 463-465 (IGS) and glutamate 516 contribute to the L-homocysteine site. L-methionine contacts are provided by residues 463–465 (IGS) and glutamate 516. 5-methyltetrahydropteroyltri-L-glutamate-binding positions include 547–548 (RC) and tryptophan 593. Aspartate 631 serves as a coordination point for L-homocysteine. L-methionine is bound at residue aspartate 631. Glutamate 637 is a binding site for 5-methyltetrahydropteroyltri-L-glutamate. 3 residues coordinate Zn(2+): histidine 673, cysteine 675, and glutamate 697. Catalysis depends on histidine 726, which acts as the Proton donor. Zn(2+) is bound at residue cysteine 758.

The protein belongs to the vitamin-B12 independent methionine synthase family. Zn(2+) serves as cofactor.

It carries out the reaction 5-methyltetrahydropteroyltri-L-glutamate + L-homocysteine = tetrahydropteroyltri-L-glutamate + L-methionine. It participates in amino-acid biosynthesis; L-methionine biosynthesis via de novo pathway; L-methionine from L-homocysteine (MetE route): step 1/1. In terms of biological role, catalyzes the transfer of a methyl group from 5-methyltetrahydrofolate to homocysteine resulting in methionine formation. The chain is 5-methyltetrahydropteroyltriglutamate--homocysteine methyltransferase from Rhodopseudomonas palustris (strain ATCC BAA-98 / CGA009).